We begin with the raw amino-acid sequence, 502 residues long: ATP synthase subunit alpha (502 aa).

169–176 (GDRQTGKT) lines the ATP pocket.

This sequence belongs to the ATPase alpha/beta chains family. F-type ATPases have 2 components, CF(1) - the catalytic core - and CF(0) - the membrane proton channel. CF(1) has five subunits: alpha(3), beta(3), gamma(1), delta(1), epsilon(1). CF(0) has three main subunits: a(1), b(2) and c(9-12). The alpha and beta chains form an alternating ring which encloses part of the gamma chain. CF(1) is attached to CF(0) by a central stalk formed by the gamma and epsilon chains, while a peripheral stalk is formed by the delta and b chains.

It localises to the cell inner membrane. It catalyses the reaction ATP + H2O + 4 H(+)(in) = ADP + phosphate + 5 H(+)(out). Produces ATP from ADP in the presence of a proton gradient across the membrane. The alpha chain is a regulatory subunit. This Nitratidesulfovibrio vulgaris (strain DSM 19637 / Miyazaki F) (Desulfovibrio vulgaris) protein is ATP synthase subunit alpha.